We begin with the raw amino-acid sequence, 432 residues long: Protein prenyltransferase alpha subunit repeat-containing protein 1-A (432 aa).

PFTA repeat units follow at residues 86–119 (ELIDVTCTLLLLNPDFTTAWNVRKELIQSGTLNP), 121–154 (KDLQLGKLALTKFPKSPETWIHRRWALQRLVQEL), 179–212 (EEMHVCCEAAGRYPSNYNSWSHRIWVVQHLGNLK), 218–251 (DELSSTKHWVSMHVSDHSGFHYRQFLLKSLLSKT), 294–327 (EEMDLNRELVDSFPGHETLWCHRRQIFNLIHQLL), and 395–432 (SFDSELRFINCVLTNCCSPEQSRFAASYRKWLLSLQGH).

This sequence belongs to the protein prenyltransferase subunit alpha family.

The chain is Protein prenyltransferase alpha subunit repeat-containing protein 1-A (ptar1-a) from Xenopus laevis (African clawed frog).